The primary structure comprises 438 residues: Trigger factor (438 aa).

The 86-residue stretch at 160–245 folds into the PPIase FKBP-type domain; that stretch reads DDKVTIDFVG…VKKIQQAELP (86 aa).

This sequence belongs to the FKBP-type PPIase family. Tig subfamily.

The protein localises to the cytoplasm. It catalyses the reaction [protein]-peptidylproline (omega=180) = [protein]-peptidylproline (omega=0). In terms of biological role, involved in protein export. Acts as a chaperone by maintaining the newly synthesized protein in an open conformation. Functions as a peptidyl-prolyl cis-trans isomerase. The polypeptide is Trigger factor (Francisella tularensis subsp. tularensis (strain FSC 198)).